Here is a 158-residue protein sequence, read N- to C-terminus: NAD(P)H-quinone oxidoreductase subunit J, chloroplastic (158 aa).

This sequence belongs to the complex I 30 kDa subunit family. In terms of assembly, NDH is composed of at least 16 different subunits, 5 of which are encoded in the nucleus.

Its subcellular location is the plastid. It is found in the chloroplast thylakoid membrane. It catalyses the reaction a plastoquinone + NADH + (n+1) H(+)(in) = a plastoquinol + NAD(+) + n H(+)(out). It carries out the reaction a plastoquinone + NADPH + (n+1) H(+)(in) = a plastoquinol + NADP(+) + n H(+)(out). Functionally, NDH shuttles electrons from NAD(P)H:plastoquinone, via FMN and iron-sulfur (Fe-S) centers, to quinones in the photosynthetic chain and possibly in a chloroplast respiratory chain. The immediate electron acceptor for the enzyme in this species is believed to be plastoquinone. Couples the redox reaction to proton translocation, and thus conserves the redox energy in a proton gradient. This Citrus sinensis (Sweet orange) protein is NAD(P)H-quinone oxidoreductase subunit J, chloroplastic.